The primary structure comprises 98 residues: Cell division topological specificity factor (98 aa).

Belongs to the MinE family.

Prevents the cell division inhibition by proteins MinC and MinD at internal division sites while permitting inhibition at polar sites. This ensures cell division at the proper site by restricting the formation of a division septum at the midpoint of the long axis of the cell. In Nitrosomonas europaea (strain ATCC 19718 / CIP 103999 / KCTC 2705 / NBRC 14298), this protein is Cell division topological specificity factor.